A 228-amino-acid polypeptide reads, in one-letter code: Homeobox protein Hox-B6a (228 aa).

An Antp-type hexapeptide motif is present at residues 132-137; it reads VYPWMQ. Residues 150-209 constitute a DNA-binding region (homeobox); it reads GRRGRQTYTRYQTLELEKEFHFNRYLTRRRRIEIAHALCLTERQIKIWFQNRRMKWKKEN.

The protein belongs to the Antp homeobox family.

It is found in the nucleus. Its function is as follows. Sequence-specific transcription factor which is part of a developmental regulatory system that provides cells with specific positional identities on the anterior-posterior axis. The sequence is that of Homeobox protein Hox-B6a (hoxb6a) from Danio rerio (Zebrafish).